Here is a 122-residue protein sequence, read N- to C-terminus: S-adenosylmethionine decarboxylase proenzyme (122 aa).

S63 serves as the catalytic Schiff-base intermediate with substrate; via pyruvic acid. A Pyruvic acid (Ser); by autocatalysis modification is found at S63. H68 acts as the Proton acceptor; for processing activity in catalysis. Catalysis depends on C83, which acts as the Proton donor; for catalytic activity.

This sequence belongs to the prokaryotic AdoMetDC family. Type 1 subfamily. In terms of assembly, heterotetramer of two alpha and two beta chains arranged as a dimer of alpha/beta heterodimers. The cofactor is pyruvate. In terms of processing, is synthesized initially as an inactive proenzyme. Formation of the active enzyme involves a self-maturation process in which the active site pyruvoyl group is generated from an internal serine residue via an autocatalytic post-translational modification. Two non-identical subunits are generated from the proenzyme in this reaction, and the pyruvate is formed at the N-terminus of the alpha chain, which is derived from the carboxyl end of the proenzyme. The post-translation cleavage follows an unusual pathway, termed non-hydrolytic serinolysis, in which the side chain hydroxyl group of the serine supplies its oxygen atom to form the C-terminus of the beta chain, while the remainder of the serine residue undergoes an oxidative deamination to produce ammonia and the pyruvoyl group blocking the N-terminus of the alpha chain.

The catalysed reaction is S-adenosyl-L-methionine + H(+) = S-adenosyl 3-(methylsulfanyl)propylamine + CO2. It participates in amine and polyamine biosynthesis; S-adenosylmethioninamine biosynthesis; S-adenosylmethioninamine from S-adenosyl-L-methionine: step 1/1. Functionally, catalyzes the decarboxylation of S-adenosylmethionine to S-adenosylmethioninamine (dcAdoMet), the propylamine donor required for the synthesis of the polyamines spermine and spermidine from the diamine putrescine. This Methanococcus maripaludis (strain DSM 14266 / JCM 13030 / NBRC 101832 / S2 / LL) protein is S-adenosylmethionine decarboxylase proenzyme.